The chain runs to 1460 residues: Venom prothrombin activator pseutarin-C non-catalytic subunit (1460 aa).

Residues 1-30 form the signal peptide; that stretch reads MGRYSVSPVPKCLLLMFLGWSGLKYYQVNA. In terms of domain architecture, Plastocyanin-like 1 spans 32–196; that stretch reads QLREYHIAAQ…SGLIGALLIC (165 aa). 2 F5/8 type A domains span residues 32–330 and 351–685; these read QLRE…LNIK and KNWE…FLDA. 4 residues coordinate Ca(2+): K124, E139, D142, and D143. N156 carries N-linked (GlcNAc...) asparagine glycosylation. A disulfide bridge links C170 with C196. N-linked (GlcNAc...) asparagine glycans are attached at residues N204 and N242. 3 Plastocyanin-like domains span residues 206–330, 351–529, and 539–685; these read SQKF…LNIK, KNWE…LLVC, and VQNK…FLDA. A disulfide bridge connects residues C251 and C332. Residues N406 and N471 are each glycosylated (N-linked (GlcNAc...) asparagine). The cysteines at positions 503 and 529 are disulfide-linked. N-linked (GlcNAc...) asparagine glycosylation occurs at N557. 4 cysteine pairs are disulfide-bonded: C672-C1032, C966-C992, C1147-C1298, and C1303-C1457. The interval 693 to 818 is b; it reads GNEEEEEDDG…PDDIAGRYLR (126 aa). Residues 773–818 constitute a propeptide, activation peptide (connecting region); the sequence is SFKGSVAEEELKHTALALEEDAHASDPRIDSNSARNPDDIAGRYLR. Plastocyanin-like domains lie at 824-992 and 1001-1143; these read NKRR…ILIC and NRTI…FTVI. In terms of domain architecture, F5/8 type A 3 spans 824–1143; the sequence is NKRRYYIAAE…RGMQALFTVI (320 aa). The Ca(2+) site is built by K920, F935, D938, and D939. N944 carries an N-linked (GlcNAc...) asparagine glycan. Residues N1001 and N1180 are each glycosylated (N-linked (GlcNAc...) asparagine). F5/8 type C domains follow at residues 1147–1298 and 1303–1457; these read CKLP…LLGC and CSVP…LFGC.

It belongs to the multicopper oxidase family. In terms of assembly, heterodimer of a light and a heavy chains; non-disulfide-linked. The interaction between the two chains is calcium-dependent. Found in its active form associated with pseutarin-C catalytic subunit (AC Q56VR3). In terms of processing, in physiological conditions, blood coagulation factor V and factor Va are inactivated by activated protein C (APC) through proteolytic degradation of the heavy chain. However, pseutarin-C non-catalytic subunit (factor V-like protein) retains its full activity even at high concentration of APC. This has two explanations: this protein has only one of the three cleavage sites present in factor V that are targeted by the APC for inactivation, and the binding with the catalytic subunit protect the cleavage site from inactivation. In terms of tissue distribution, expressed by the venom gland.

It is found in the secreted. In terms of biological role, snake prothrombin activator that attacks the hemostatic system of prey. This non-catalytic subunit is functionally similar to blood coagulation factor V. It serves as a critical cofactor for the prothrombinase activity of the catalytic subunit, which is similar to the blood coagulation factor X. The complex converts prothrombin to thrombin by sequential cleavage at two positions, Arg-320 followed by Arg-271. Cleavage at Arg-320 produces an active intermediate known as meizothrombin. Meizothrombin is the 'second' substrate for prothrombinase, and it docks in an altered manner to present the second cleavage site (271). Cleavage at Arg-271 releases active thrombin from its pro-fragment. This order of events is reversed if the protease component of prothrombinase is used on its own, suggesting that the 271 site is inherently more accessible to proteolysis. The complex converts prothrombin to thrombin in presence but also in the absence of membrane. The polypeptide is Venom prothrombin activator pseutarin-C non-catalytic subunit (Pseudonaja textilis (Eastern brown snake)).